The sequence spans 160 residues: H/ACA ribonucleoprotein complex subunit 2 (160 aa).

Phosphoserine is present on Ser-15. Residue Thr-23 is modified to Phosphothreonine.

This sequence belongs to the eukaryotic ribosomal protein eL8 family. As to quaternary structure, component of the box H/ACA small nucleolar ribonucleoprotein (H/ACA snoRNP) complex consisting of Nop60B, Gar1, NPH2 and Nop10, and associated with H/ACA-type snoRNAs.

Its subcellular location is the nucleus. It localises to the nucleolus. Its function is as follows. Component of the box H/ACA small nucleolar ribonucleoprotein (H/ACA snoRNP) complex, which catalyzes pseudouridylation of rRNA. This involves the isomerization of uridine such that the ribose is subsequently attached to C5, instead of the normal N1. Pseudouridine ('psi') residues may serve to stabilize the conformation of rRNAs. Required for ribosome biogenesis. H/ACA snoRNP complex-dependent ribosome biogenesis is important in female germline cell differentiation during oogenesis. This Drosophila melanogaster (Fruit fly) protein is H/ACA ribonucleoprotein complex subunit 2.